We begin with the raw amino-acid sequence, 1248 residues long: Actin cytoskeleton-regulatory complex protein PAN1 (1248 aa).

The region spanning 93 to 182 (DQAKFETLFR…SKVKNEVSSF (90 aa)) is the EH 1 domain. One can recognise an EF-hand 1 domain in the interval 126–161 (LSPFQLGLIWTLCDTNNAGELLFPEFALAMHLVNGV). Residues 313–337 (ANPLLSQLTGGQGFQQQRQPTGANS) are disordered. The span at 316-337 (LLSQLTGGQGFQQQRQPTGANS) shows a compositional bias: polar residues. EF-hand domains lie at 426–449 (EEKS…LHFK) and 460–495 (LNRS…IYRR). An EH 2 domain is found at 427 to 516 (EKSLFYNIFD…PSLVPSSTRI (90 aa)). Ca(2+) contacts are provided by Asp473, Asn475, Ser477, Gln479, and Glu484. A disordered region spans residues 548-575 (DILPSFKNRRKTFTEPRQSKDNKTVDDL). Residues 559-575 (TFTEPRQSKDNKTVDDL) show a composition bias toward basic and acidic residues. 3 coiled-coil regions span residues 566–601 (SKDN…KDQQ), 713–746 (SEAD…NDIK), and 787–879 (DFIR…ASRE). Positions 800-817 (QAQEQARAQEQARAQEQA) are enriched in low complexity. The interval 800 to 1248 (QAQEQARAQE…PYIPPPPPLP (449 aa)) is disordered. The span at 818–833 (RAQEKARAQEKARAQE) shows a compositional bias: basic and acidic residues. Positions 834–868 (QARVQEQARAQEQARAQEQARAQEQARAQEQARAQ) are enriched in low complexity. Residues 869-888 (EQAKADAASRESTRSPEEFA) are compositionally biased toward basic and acidic residues. The segment covering 904–915 (SVSPQSQSVSVS) has biased composition (low complexity). Polar residues-rich tracts occupy residues 916 to 928 (NRGT…QQMG) and 946 to 964 (RQQS…TTDF). A compositionally biased stretch (acidic residues) spans 965-974 (NSEDEEDEEE). Positions 965 to 997 (NSEDEEDEEERSLREQLAALKLKRKAEKEAKLA) form a coiled coil. A compositionally biased stretch (polar residues) spans 1023–1037 (SRPSHTPVYSTSPAM). The span at 1078–1091 (KAAEQQRRLQRGLD) shows a compositional bias: basic and acidic residues. Residues 1092 to 1101 (DGDGWSDDED) show a composition bias toward acidic residues. A compositionally biased stretch (polar residues) spans 1105-1123 (KPTQPTATTSATDIPSSGA). Pro residues-rich tracts occupy residues 1150 to 1161 (PVVPSPPVPQPG) and 1239 to 1248 (PYIPPPPPLP).

This sequence belongs to the PAN1 family. Component of the PAN1 actin cytoskeleton-regulatory complex.

It localises to the cell membrane. Its subcellular location is the endosome membrane. The protein resides in the cytoplasm. The protein localises to the cytoskeleton. It is found in the actin patch. In terms of biological role, component of the PAN1 actin cytoskeleton-regulatory complex required for the internalization of endosomes during actin-coupled endocytosis. The complex links the site of endocytosis to the cell membrane-associated actin cytoskeleton. Mediates uptake of external molecules and vacuolar degradation of plasma membrane proteins. Plays a role in the proper organization of the cell membrane-associated actin cytoskeleton and promotes its destabilization. The sequence is that of Actin cytoskeleton-regulatory complex protein PAN1 (PAN1) from Eremothecium gossypii (strain ATCC 10895 / CBS 109.51 / FGSC 9923 / NRRL Y-1056) (Yeast).